The following is a 23-amino-acid chain: Large ribosomal subunit protein uL10 (23 aa).

Belongs to the universal ribosomal protein uL10 family. In terms of assembly, part of the ribosomal stalk of the 50S ribosomal subunit. The N-terminus interacts with L11 and the large rRNA to form the base of the stalk. The C-terminus forms an elongated spine to which L12 dimers bind in a sequential fashion forming a multimeric L10(L12)X complex.

In terms of biological role, forms part of the ribosomal stalk, playing a central role in the interaction of the ribosome with GTP-bound translation factors. This chain is Large ribosomal subunit protein uL10 (rplJ), found in Klebsiella pneumoniae.